A 557-amino-acid chain; its full sequence is Nucleoporin AMO1 (557 aa).

The C3H1-type zinc-finger motif lies at 1-25 (MTVCRFWQQGYCRNGNACKFEHPPK). Positions 114 to 141 (QGALNEIQAAYQAAQQQIQNTLQNIPAA) form a coiled coil. The disordered stretch occupies residues 161-297 (ESSKGSSTGG…SALGPKPGAF (137 aa)). 10 SXFG repeats span residues 171-174 (SVFG), 200-203 (SAFG), 213-216 (SAFG), 228-231 (SAFG), 240-243 (SAFG), 249-252 (STFG), 262-265 (SAFG), 282-285 (SAFG), 303-306 (SAFG), and 314-317 (SPFG). The segment covering 195-215 (STPSTSAFGQPSPLGQKSSAF) has biased composition (polar residues). Residues 243–253 (GSPQTGSTFGQ) show a composition bias toward polar residues. Positions 315–463 (PFGAAAQATQ…DLLSYATKNP (149 aa)) are disordered. 2 stretches are compositionally biased toward polar residues: residues 321–338 (QATQ…QAAN) and 351–366 (GQPS…GQPS). 4 SXFG repeats span residues 348-351 (SAFG), 370-373 (SAFG), 387-390 (SLFG), and 407-410 (SAFG). Low complexity predominate over residues 367 to 385 (TQSSAFGQQQPQQAGTFGS). Residues 388–429 (LFGQQQQQPSNVFGQPSTTSAFGSQAATSGFSQLGNATSTIG) are compositionally biased toward polar residues. Positions 430-443 (ASPAGAQAPASKSP) are enriched in low complexity.

The nuclear pore complex (NPC) constitutes the exclusive means of nucleocytoplasmic transport. NPCs allow the passive diffusion of ions and small molecules and the active, nuclear transport receptor-mediated bidirectional transport of macromolecules such as proteins, RNAs, ribonucleoparticles (RNPs), and ribosomal subunits across the nuclear envelope. The 55-60 MDa NPC is composed of at least 28 different subunits: AMO1, ELYS, GLE1, GLE2, MLP1, NDC1, NIC96, NSP1, NUP133, NUP145, NUP152, NUP159, NUP170, NUP188, NUP192, NUP37, NUP49, NUP53, NUP56, NUP57, NUP82, NUP84, NUP85, POM152, POM33, POM34, SEC13 and SEH1. Due to its 8-fold rotational symmetry, all subunits are present with 8 copies or multiples thereof.

The protein localises to the nucleus. The protein resides in the nuclear pore complex. Its subcellular location is the nucleus membrane. Functionally, functions as a component of the nuclear pore complex (NPC). NPC components, collectively referred to as nucleoporins (NUPs), can play the role of both NPC structural components and of docking or interaction partners for transiently associated nuclear transport factors. Active directional transport is assured by both, a Phe-Gly (FG) repeat affinity gradient for these transport factors across the NPC and a transport cofactor concentration gradient across the nuclear envelope (GSP1 and GSP2 GTPases associated predominantly with GTP in the nucleus, with GDP in the cytoplasm). AMO1 is specifically important for nuclear protein and mRNA export. This Chaetomium thermophilum (strain DSM 1495 / CBS 144.50 / IMI 039719) (Thermochaetoides thermophila) protein is Nucleoporin AMO1 (AMO1).